An 851-amino-acid polypeptide reads, in one-letter code: Transforming growth factor beta receptor type 3 (851 aa).

Residues 1–20 (MTSHYVIAIFALMSSCLATA) form the signal peptide. Residues 21-787 (GPEPGALCEL…IFHGLDTLTV (767 aa)) lie on the Extracellular side of the membrane. Residues Cys-52 and Cys-197 are joined by a disulfide bond. N-linked (GlcNAc...) asparagine glycosylation is found at Asn-141 and Asn-492. One can recognise a ZP domain in the interval 455–730 (KCDNEKMIVA…PKCVPPDEAC (276 aa)). Residues Ser-534 and Ser-545 are each glycosylated (O-linked (Xyl...) (glycosaminoglycan) serine). N-linked (GlcNAc...) asparagine glycans are attached at residues Asn-571, Asn-590, and Asn-697. 3 disulfide bridges follow: Cys-639-Cys-705, Cys-660-Cys-730, and Cys-710-Cys-723. The interaction with TGF-beta ligand stretch occupies residues 737 to 751 (IIWAMMQNKKTFTKP). A helical membrane pass occupies residues 788–809 (MGIAFAAFVIGALLTGALWYIY). The Cytoplasmic portion of the chain corresponds to 810–851 (SHTGETAGRQQVPTSPPASENSSAAHSIGSTQSTPCSSSSTA). Residues 816–851 (AGRQQVPTSPPASENSSAAHSIGSTQSTPCSSSSTA) form a disordered region. Positions 817 to 834 (GRQQVPTSPPASENSSAA) are enriched in polar residues. Residues 836–851 (SIGSTQSTPCSSSSTA) are compositionally biased toward low complexity. Phosphothreonine is present on Thr-840.

In terms of assembly, forms homodimers and homooligomers. Interacts with DYNLT4. Interacts with integrin ITGA5:ITGB1; this interaction promotes the internalization and trafficking of ITGA5:ITGB1 into endocytic vesicles. Interacts with TGFB1, BMP2, BMP5, BMP7 or GDF5 and inhibin A via the ligand binding domains. Interacts with ALK3/BMPR1A; this interaction results in the cell surface retention of BMPR1A. Interacts with ALK6/BMPR1B; this interaction enhances BMPR1B-mediated stimulation of the BMP signaling pathway. Interacts with the scaffolding protein beta-arrestin2/ARRB2; this interaction mediates internalization of TGFBR3 and thus regulates migration, actin cytoskeleton and activation of CDC42. As to quaternary structure, (Microbial infection) Interacts with human cytomegalovirus trimer complex composed of gH, gL, and gO; these interactions may promote HCMV cell entry in specific cell types. Extensively modified by glycosaminoglycan groups (GAG). Post-translationally, phosphorylated in the cytoplasmic domain by the type II receptor TGFBR2 at THR-840 to mediate recruitment of ARRB2 and subsequent internalization of TGFBR2 and TGFBR3.

Its subcellular location is the cell membrane. It localises to the secreted. The protein localises to the extracellular space. The protein resides in the extracellular matrix. Its function is as follows. Cell surface receptor that regulates diverse cellular processes including cell proliferation, differentiation, migration, and apoptosis. Initiates BMP, inhibin, and TGF-beta signaling pathways by interacting with different ligands including TGFB1, BMP2, BMP5, BMP7 or GDF5. Alternatively, acts as a cell surface coreceptor for BMP ligands, serving to enhance ligand binding by differentially regulating BMPR1A/ALK3 and BMPR1B/ALK6 receptor trafficking. Promotes epithelial cell adhesion, focal adhesion formation and integrin signaling during epithelial cell spreading on fibronectin. By interacting with the scaffolding protein beta-arrestin2/ARRB2, regulates migration or actin cytoskeleton and promotes the activation of CDC42 as well as the inhibition of NF-kappa-B. In gonadotrope cells, acts as an inhibin A coreceptor and regulates follicle-stimulating hormone (FSH) levels and female fertility. Plays a role in the inhibition of directed and random cell migration in epithelial cells by altering the actin cytoskeletal organization. Participates in epithelial-mesenchymal transformation (EMT) upon binding to BMP2 or TGFB2, by activating the PAR6/SMURF1/RHOA pathway. (Microbial infection) May act as a receptor for human cytomegalovirus in different cell types by interacting with HCMV trimer composed of GO, GH and GL. The chain is Transforming growth factor beta receptor type 3 from Homo sapiens (Human).